Consider the following 86-residue polypeptide: Neurotoxin-like protein pMD18-NTL3 (86 aa).

Residues 1–21 (MKTLLLTLVVLTIACLDLGYT) form the signal peptide. 4 disulfide bridges follow: C24/C45, C38/C62, C66/C78, and C79/C84.

Belongs to the three-finger toxin family. Short-chain subfamily. Orphan group IX sub-subfamily. Expressed by the venom gland.

It localises to the secreted. The sequence is that of Neurotoxin-like protein pMD18-NTL3 from Bungarus multicinctus (Many-banded krait).